The sequence spans 238 residues: 7-cyano-7-deazaguanine synthase (238 aa).

12–22 lines the ATP pocket; it reads FSGGQDSGTCL. Zn(2+) contacts are provided by C200, C215, C218, and C221.

It belongs to the QueC family. Zn(2+) serves as cofactor.

The catalysed reaction is 7-carboxy-7-deazaguanine + NH4(+) + ATP = 7-cyano-7-deazaguanine + ADP + phosphate + H2O + H(+). Its pathway is purine metabolism; 7-cyano-7-deazaguanine biosynthesis. Functionally, catalyzes the ATP-dependent conversion of 7-carboxy-7-deazaguanine (CDG) to 7-cyano-7-deazaguanine (preQ(0)). The protein is 7-cyano-7-deazaguanine synthase of Lawsonia intracellularis (strain PHE/MN1-00).